The following is a 458-amino-acid chain: Exodeoxyribonuclease 7 large subunit (458 aa).

The protein belongs to the XseA family. As to quaternary structure, heterooligomer composed of large and small subunits.

The protein resides in the cytoplasm. It carries out the reaction Exonucleolytic cleavage in either 5'- to 3'- or 3'- to 5'-direction to yield nucleoside 5'-phosphates.. Bidirectionally degrades single-stranded DNA into large acid-insoluble oligonucleotides, which are then degraded further into small acid-soluble oligonucleotides. The sequence is that of Exodeoxyribonuclease 7 large subunit from Sodalis glossinidius (strain morsitans).